The following is a 294-amino-acid chain: Ribosomal protein L11 methyltransferase (294 aa).

The S-adenosyl-L-methionine site is built by threonine 145, glycine 166, aspartate 188, and asparagine 227.

The protein belongs to the methyltransferase superfamily. PrmA family.

It localises to the cytoplasm. The enzyme catalyses L-lysyl-[protein] + 3 S-adenosyl-L-methionine = N(6),N(6),N(6)-trimethyl-L-lysyl-[protein] + 3 S-adenosyl-L-homocysteine + 3 H(+). In terms of biological role, methylates ribosomal protein L11. This Hydrogenovibrio crunogenus (strain DSM 25203 / XCL-2) (Thiomicrospira crunogena) protein is Ribosomal protein L11 methyltransferase.